A 464-amino-acid chain; its full sequence is Bifunctional protein GlmU (464 aa).

The pyrophosphorylase stretch occupies residues 1–232 (MKHDELAAVI…ADEAMGINDR (232 aa)). Residues 11-14 (LAAG), lysine 25, glutamine 76, and 81-82 (GT) each bind UDP-N-acetyl-alpha-D-glucosamine. A Mg(2+)-binding site is contributed by aspartate 106. Positions 143, 157, 172, and 230 each coordinate UDP-N-acetyl-alpha-D-glucosamine. Asparagine 230 contacts Mg(2+). Positions 233-253 (VQLAQASALMRRRINENLMRA) are linker. Residues 254–464 (GVSFIDPEQT…RHDPKCKNKD (211 aa)) are N-acetyltransferase. UDP-N-acetyl-alpha-D-glucosamine-binding residues include arginine 336 and lysine 354. Histidine 366 acts as the Proton acceptor in catalysis. Residues tyrosine 369 and asparagine 380 each contribute to the UDP-N-acetyl-alpha-D-glucosamine site. Acetyl-CoA-binding positions include 389–390 (NY), serine 408, alanine 426, and arginine 443.

This sequence in the N-terminal section; belongs to the N-acetylglucosamine-1-phosphate uridyltransferase family. It in the C-terminal section; belongs to the transferase hexapeptide repeat family. Homotrimer. Mg(2+) serves as cofactor.

The protein localises to the cytoplasm. It carries out the reaction alpha-D-glucosamine 1-phosphate + acetyl-CoA = N-acetyl-alpha-D-glucosamine 1-phosphate + CoA + H(+). The catalysed reaction is N-acetyl-alpha-D-glucosamine 1-phosphate + UTP + H(+) = UDP-N-acetyl-alpha-D-glucosamine + diphosphate. It participates in nucleotide-sugar biosynthesis; UDP-N-acetyl-alpha-D-glucosamine biosynthesis; N-acetyl-alpha-D-glucosamine 1-phosphate from alpha-D-glucosamine 6-phosphate (route II): step 2/2. Its pathway is nucleotide-sugar biosynthesis; UDP-N-acetyl-alpha-D-glucosamine biosynthesis; UDP-N-acetyl-alpha-D-glucosamine from N-acetyl-alpha-D-glucosamine 1-phosphate: step 1/1. The protein operates within bacterial outer membrane biogenesis; LPS lipid A biosynthesis. Functionally, catalyzes the last two sequential reactions in the de novo biosynthetic pathway for UDP-N-acetylglucosamine (UDP-GlcNAc). The C-terminal domain catalyzes the transfer of acetyl group from acetyl coenzyme A to glucosamine-1-phosphate (GlcN-1-P) to produce N-acetylglucosamine-1-phosphate (GlcNAc-1-P), which is converted into UDP-GlcNAc by the transfer of uridine 5-monophosphate (from uridine 5-triphosphate), a reaction catalyzed by the N-terminal domain. This Syntrophotalea carbinolica (strain DSM 2380 / NBRC 103641 / GraBd1) (Pelobacter carbinolicus) protein is Bifunctional protein GlmU.